The following is a 360-amino-acid chain: Deoxyhypusine hydroxylase (360 aa).

HEAT-like PBS-type repeat units follow at residues 56 to 82, 89 to 115, and 213 to 245; these read LKHE…ILQD, VRHE…YRSD, and ERYR…GLQD. Fe cation-binding residues include His58, Glu59, His91, and Glu92. Residues His252, Glu253, His285, and Glu286 each coordinate Fe cation.

It belongs to the deoxyhypusine hydroxylase family. It depends on Fe(2+) as a cofactor.

Its subcellular location is the cytoplasm. It is found in the nucleus. It carries out the reaction [eIF5A protein]-deoxyhypusine + AH2 + O2 = [eIF5A protein]-hypusine + A + H2O. It participates in protein modification; eIF5A hypusination. Functionally, catalyzes the hydroxylation of the N(6)-(4-aminobutyl)-L-lysine intermediate to form hypusine, an essential post-translational modification only found in mature eIF-5A factor. In Mycosarcoma maydis (Corn smut fungus), this protein is Deoxyhypusine hydroxylase.